A 552-amino-acid polypeptide reads, in one-letter code: Acyl-CoA synthetase FUM10 (552 aa).

183-194 (ELFTSGTTGAPK) is a binding site for AMP. Residues 463–536 (EIEHVARLHD…QEIPYNRTGK (74 aa)) form an AMP-binding region.

It belongs to the ATP-dependent AMP-binding enzyme family.

Its pathway is mycotoxin biosynthesis. In terms of biological role, acyl-CoA synthetase; part of the gene cluster that mediates the biosynthesis of fumonisins B1 (FB1), B2 (FB2), B3 (FB3), and B4 (FB4), which are carcinogenic mycotoxins. Within the pathway, FUM10 is involved the addition of the tricarballylic moieties to the carbon backbone. FUM10 catalyzes the CoA activation of citrate to form tricarballylic acid. The biosynthesis starts with the FUM1-catalyzed carbon chain assembly from one molecule of acetyl-CoA, eight molecules of malonyl-CoA, and two molecules of methionine (in S-adenosyl form). The C18 polyketide chain is released from the enzyme by a nucleophilic attack of a carbanion, which is derived from R-carbon of alanine by decarboxylation, on the carbonyl carbon of polyketide acyl chain. This step is catalyzed by the pyridoxal 5'-phosphate-dependent aminoacyl transferase FUM8. The resultant 3-keto intermediate is then stereospecifically reduced to a 3-hydroxyl product by reductase FUM13. Subsequent oxidations at C-10 by the cytochrome P450 monooxygenase FUM2, C-14 and C-15 by FUM6, FUM12 or FUM15, tricarballylic esterification of the hydroxyl groups on C-14 and C-15 by acyltransferase FUM14, and C-5 hydroxylation by 2-keto-glutarate-dependent dioxygenase FUM3 furnish the biosynthesis of fumonisins. The tricarballylic moieties are most likely derived from the citric acid cycle, and their addition to the carbon backbone may involve FUM7, FUM10, FUM11 and FUM14. The chain is Acyl-CoA synthetase FUM10 from Gibberella moniliformis (strain M3125 / FGSC 7600) (Maize ear and stalk rot fungus).